The following is a 405-amino-acid chain: MNLALNLLYKRGFLKQCTSLKVLSDLMDREKIVFYAGVDTTSSSLHIGHLIPFLAMMHLRQHGHMPIVLIGDSTTKIGDPSGKSEMRKILSSEVINNNALSIKNQLQKITRFSSSCFIHNSNWLDNLNYIEFLRDIGIHFSVNRMLSFETYKRRLDFGLSFIEFNYQLLQSYDYYMLNKIKNCKLQIGGDDQWGNIVSGVDLIRRKMGVEAFGLTFPLITRSDGKKMGKSEKGAVYLDSSLYSIYDFYQYFRNTSDSDVKTFLYLFTFLEEDEIESISNFKGNSLNKAKEILAFEITKIVHGEVEALKVQEASFAAFRGSGDRSNIPFFKFSFSGLEEEILLIDLMLDSKIVPSKSEGRRLINSGGVYINGKRVENQNHCITREDFNNNEIELRVGKKKFLRIVL.

Tyr35 lines the L-tyrosine pocket. The 'HIGH' region motif lies at 40 to 49; sequence TTSSSLHIGH. L-tyrosine contacts are provided by Tyr166 and Gln170. Positions 226–230 match the 'KMSKS' region motif; the sequence is KMGKS. Position 229 (Lys229) interacts with ATP. The 65-residue stretch at 340-404 folds into the S4 RNA-binding domain; that stretch reads ILLIDLMLDS…VGKKKFLRIV (65 aa).

The protein belongs to the class-I aminoacyl-tRNA synthetase family. TyrS type 1 subfamily. As to quaternary structure, homodimer.

It localises to the cytoplasm. The enzyme catalyses tRNA(Tyr) + L-tyrosine + ATP = L-tyrosyl-tRNA(Tyr) + AMP + diphosphate + H(+). In terms of biological role, catalyzes the attachment of tyrosine to tRNA(Tyr) in a two-step reaction: tyrosine is first activated by ATP to form Tyr-AMP and then transferred to the acceptor end of tRNA(Tyr). The protein is Tyrosine--tRNA ligase of Borrelia garinii subsp. bavariensis (strain ATCC BAA-2496 / DSM 23469 / PBi) (Borreliella bavariensis).